The primary structure comprises 478 residues: Lactate utilization protein B (478 aa).

2 consecutive 4Fe-4S ferredoxin-type domains span residues 303–333 (GTEF…GHAY) and 352–381 (YDDH…LHEQ). Residues C312, C315, C318, C322, C365, C368, and C372 each coordinate [4Fe-4S] cluster.

This sequence belongs to the LutB/YkgF family.

Is involved in L-lactate degradation and allows cells to grow with lactate as the sole carbon source. Has probably a role as an electron transporter during oxidation of L-lactate. The polypeptide is Lactate utilization protein B (Oceanobacillus iheyensis (strain DSM 14371 / CIP 107618 / JCM 11309 / KCTC 3954 / HTE831)).